Reading from the N-terminus, the 73-residue chain is UPF0154 protein LGAS_0795 (73 aa).

Residues 3-23 (LGLAIFLIIIALLIGLVGGFY) form a helical membrane-spanning segment.

The protein belongs to the UPF0154 family.

The protein resides in the cell membrane. This Lactobacillus gasseri (strain ATCC 33323 / DSM 20243 / BCRC 14619 / CIP 102991 / JCM 1131 / KCTC 3163 / NCIMB 11718 / NCTC 13722 / AM63) protein is UPF0154 protein LGAS_0795.